Consider the following 368-residue polypeptide: DNA-directed RNA polymerase subunit alpha (368 aa).

Residues 1-231 (MLWKGFQKPK…DHMNIFINFE (231 aa)) form an alpha N-terminal domain (alpha-NTD) region. Residues 243 to 368 (KPEIRNENLN…GFGGDNNPGF (126 aa)) form an alpha C-terminal domain (alpha-CTD) region.

Belongs to the RNA polymerase alpha chain family. As to quaternary structure, homodimer. The RNAP catalytic core consists of 2 alpha, 1 beta, 1 beta' and 1 omega subunit. When a sigma factor is associated with the core the holoenzyme is formed, which can initiate transcription.

It carries out the reaction RNA(n) + a ribonucleoside 5'-triphosphate = RNA(n+1) + diphosphate. DNA-dependent RNA polymerase catalyzes the transcription of DNA into RNA using the four ribonucleoside triphosphates as substrates. The protein is DNA-directed RNA polymerase subunit alpha of Koribacter versatilis (strain Ellin345).